The sequence spans 389 residues: Krueppel-like factor 17 (389 aa).

Disordered regions lie at residues 1–48 (MYGR…SGVH) and 239–279 (LVSQ…GSSE). Residues 26 to 38 (AQDNENSAPILNM) are compositionally biased toward polar residues. The segment covering 264-278 (KNSRPQEGTGRRGSS) has biased composition (basic and acidic residues). 3 C2H2-type zinc fingers span residues 283–307 (YCCN…QRKH), 313–337 (YSCN…MRVH), and 343–365 (YKCD…QKTH). The tract at residues 356–389 (DHLKQHQKTHRPGPSDPQANNNNGEQDSPPAAGP) is disordered. Residues 372-381 (PQANNNNGEQ) show a composition bias toward polar residues.

The protein belongs to the Sp1 C2H2-type zinc-finger protein family.

Its subcellular location is the nucleus. In terms of biological role, transcription repressor that binds to the promoter of target genes and prevents their expression. Acts as a negative regulator of epithelial-mesenchymal transition and metastasis in breast cancer. Specifically binds the 5'-CACCC-3' sequence in the promoter of ID1, a key metastasis regulator in breast cancer, and repress its expression. May be a germ cell-specific transcription factor that plays important roles in spermatid differentiation and oocyte development. The chain is Krueppel-like factor 17 (KLF17) from Homo sapiens (Human).